A 247-amino-acid polypeptide reads, in one-letter code: Probable chemoreceptor glutamine deamidase CheD (247 aa).

A disordered region spans residues 204 to 247; sequence KRPAAPQPARPRIELFGGRGTTPGAGSQAAGSPYAANLSRKQEA.

Belongs to the CheD family.

The catalysed reaction is L-glutaminyl-[protein] + H2O = L-glutamyl-[protein] + NH4(+). Its function is as follows. Probably deamidates glutamine residues to glutamate on methyl-accepting chemotaxis receptors (MCPs), playing an important role in chemotaxis. The chain is Probable chemoreceptor glutamine deamidase CheD from Burkholderia orbicola (strain MC0-3).